Here is a 97-residue protein sequence, read N- to C-terminus: Aspartyl/glutamyl-tRNA(Asn/Gln) amidotransferase subunit C (97 aa).

It belongs to the GatC family. In terms of assembly, heterotrimer of A, B and C subunits.

The enzyme catalyses L-glutamyl-tRNA(Gln) + L-glutamine + ATP + H2O = L-glutaminyl-tRNA(Gln) + L-glutamate + ADP + phosphate + H(+). The catalysed reaction is L-aspartyl-tRNA(Asn) + L-glutamine + ATP + H2O = L-asparaginyl-tRNA(Asn) + L-glutamate + ADP + phosphate + 2 H(+). Its function is as follows. Allows the formation of correctly charged Asn-tRNA(Asn) or Gln-tRNA(Gln) through the transamidation of misacylated Asp-tRNA(Asn) or Glu-tRNA(Gln) in organisms which lack either or both of asparaginyl-tRNA or glutaminyl-tRNA synthetases. The reaction takes place in the presence of glutamine and ATP through an activated phospho-Asp-tRNA(Asn) or phospho-Glu-tRNA(Gln). In Prochlorococcus marinus subsp. pastoris (strain CCMP1986 / NIES-2087 / MED4), this protein is Aspartyl/glutamyl-tRNA(Asn/Gln) amidotransferase subunit C.